Reading from the N-terminus, the 694-residue chain is MQTSPDMFINRELSWLRFNSRVLDQCSKNLPLLEKLKFIAIYCTNLDEFYMIRVAGLKQLFSAGVNASSSDEMTPLQQLKAIRKYLHQEKELLEHYFNEITSELEKENLFIKHYENLDENLKQKCDEYFFSNIFPVIVPIAVDATHPFPHLNNLSFSLAVKIFDKAHPELVKFGMIRIPRVLPRFYEVSANIYVPIESIVHQHAEEIFPGYKLLASAAFRVTRNADMVIEEEEADDFMMILEQGLKLRRKGAFVRLQIQKDADEQIVEFLNTHMKIFHKDVYEYSILLNLPSLWQIAGNKNFTHLLSPLYTPKTLPPFDENLSIFDAVEKEDILIIQPFESFDPVYKFIKEASKDPEVISIRMTLYRVEKNSNIVQALIDAASDGKQVTVMVELKARFDEENNLHWAKALENAGAHVIYGITGFKVHAKVSQVIRKQGDKLKFYMHLSTGNYNASSAKIYTDVSYFTSKAEFARDTTSFFHILSGFSKNRRLQTLSMSPNQIKEKILEMIRIETSKKNKGVIVAKMNSLVDSDIIQALYEASMEGVKIDLIIRGICCLKPDEEYSKNIRVRSIIGKYLEHARVFYFKHSEPNYFISSADWMPRNLERRLELMTPIYDERSKAKLAQFLRLQLSDNVLAYELKNNGEYEKIPSSEKTIDSQQTLEEYVSKIYKTLKKDTDQSRATHLASKLFKEN.

Position 45 (Asn-45) interacts with ATP. Residues Arg-367 and Arg-397 each coordinate Mg(2+). Catalysis depends on His-427, which acts as the Phosphohistidine intermediate. ATP is bound by residues Tyr-460, Arg-553, and His-580.

This sequence belongs to the polyphosphate kinase 1 (PPK1) family. The cofactor is Mg(2+). Post-translationally, an intermediate of this reaction is the autophosphorylated ppk in which a phosphate is covalently linked to a histidine residue through a N-P bond.

The catalysed reaction is [phosphate](n) + ATP = [phosphate](n+1) + ADP. Its function is as follows. Catalyzes the reversible transfer of the terminal phosphate of ATP to form a long-chain polyphosphate (polyP). The polypeptide is Polyphosphate kinase (Campylobacter jejuni subsp. doylei (strain ATCC BAA-1458 / RM4099 / 269.97)).